Here is a 675-residue protein sequence, read N- to C-terminus: Potassium-transporting ATPase ATP-binding subunit 2 (675 aa).

A run of 4 helical transmembrane segments spans residues 34-54, 65-85, 216-236, and 245-265; these read IMFV…FPDI, LITI…SEAF, IALF…IVTL, and LILP…TTIG. The 4-aspartylphosphate intermediate role is filled by D304. ATP contacts are provided by residues D341, E345, 372-379, and K390; that span reads FTAETRMS. The Mg(2+) site is built by D513 and D517. 3 helical membrane-spanning segments follow: residues 569–591, 611–631, and 644–664; these read ALTT…ALMM, AIIS…PIAM, and IFIN…FLGI.

It belongs to the cation transport ATPase (P-type) (TC 3.A.3) family. Type IA subfamily. In terms of assembly, the system is composed of three essential subunits: KdpA, KdpB and KdpC.

It is found in the cell membrane. It catalyses the reaction K(+)(out) + ATP + H2O = K(+)(in) + ADP + phosphate + H(+). Part of the high-affinity ATP-driven potassium transport (or Kdp) system, which catalyzes the hydrolysis of ATP coupled with the electrogenic transport of potassium into the cytoplasm. This subunit is responsible for energy coupling to the transport system and for the release of the potassium ions to the cytoplasm. The sequence is that of Potassium-transporting ATPase ATP-binding subunit 2 from Staphylococcus aureus (strain Mu50 / ATCC 700699).